Consider the following 349-residue polypeptide: Protein-glutamate methylesterase/protein-glutamine glutaminase (349 aa).

Residues 5–122 (RVLSVDDSAL…REGMLAYSEM (118 aa)) form the Response regulatory domain. A 4-aspartylphosphate modification is found at Asp-56. Positions 152–344 (LLSSEKLIAI…QQMLAKISAG (193 aa)) constitute a CheB-type methylesterase domain. Catalysis depends on residues Ser-164, His-190, and Asp-286.

This sequence belongs to the CheB family. In terms of processing, phosphorylated by CheA. Phosphorylation of the N-terminal regulatory domain activates the methylesterase activity.

The protein localises to the cytoplasm. It catalyses the reaction [protein]-L-glutamate 5-O-methyl ester + H2O = L-glutamyl-[protein] + methanol + H(+). The catalysed reaction is L-glutaminyl-[protein] + H2O = L-glutamyl-[protein] + NH4(+). In terms of biological role, involved in chemotaxis. Part of a chemotaxis signal transduction system that modulates chemotaxis in response to various stimuli. Catalyzes the demethylation of specific methylglutamate residues introduced into the chemoreceptors (methyl-accepting chemotaxis proteins or MCP) by CheR. Also mediates the irreversible deamidation of specific glutamine residues to glutamic acid. The protein is Protein-glutamate methylesterase/protein-glutamine glutaminase of Escherichia coli O6:K15:H31 (strain 536 / UPEC).